A 64-amino-acid polypeptide reads, in one-letter code: Beta sliding clamp (64 aa).

It belongs to the beta sliding clamp family. As to quaternary structure, forms a ring-shaped head-to-tail homodimer around DNA which binds and tethers DNA polymerases and other proteins to the DNA. The DNA replisome complex has a single clamp-loading complex (3 tau and 1 each of delta, delta', psi and chi subunits) which binds 3 Pol III cores (1 core on the leading strand and 2 on the lagging strand) each with a beta sliding clamp dimer. Additional proteins in the replisome are other copies of gamma, psi and chi, Ssb, DNA helicase and RNA primase.

The protein localises to the cytoplasm. Its function is as follows. Confers DNA tethering and processivity to DNA polymerases and other proteins. Acts as a clamp, forming a ring around DNA (a reaction catalyzed by the clamp-loading complex) which diffuses in an ATP-independent manner freely and bidirectionally along dsDNA. Initially characterized for its ability to contact the catalytic subunit of DNA polymerase III (Pol III), a complex, multichain enzyme responsible for most of the replicative synthesis in bacteria; Pol III exhibits 3'-5' exonuclease proofreading activity. The beta chain is required for initiation of replication as well as for processivity of DNA replication. The protein is Beta sliding clamp (dnaN) of Actinobacillus pleuropneumoniae (Haemophilus pleuropneumoniae).